Reading from the N-terminus, the 293-residue chain is Acetylglutamate kinase (293 aa).

Substrate contacts are provided by residues 65-66 (GG), arginine 87, and asparagine 188.

This sequence belongs to the acetylglutamate kinase family. ArgB subfamily.

It localises to the cytoplasm. It carries out the reaction N-acetyl-L-glutamate + ATP = N-acetyl-L-glutamyl 5-phosphate + ADP. Its pathway is amino-acid biosynthesis; L-arginine biosynthesis; N(2)-acetyl-L-ornithine from L-glutamate: step 2/4. Catalyzes the ATP-dependent phosphorylation of N-acetyl-L-glutamate. In Symbiobacterium thermophilum (strain DSM 24528 / JCM 14929 / IAM 14863 / T), this protein is Acetylglutamate kinase.